Reading from the N-terminus, the 1180-residue chain is RecBCD enzyme subunit RecB (1180 aa).

The tract at residues 1-852 (MITTIPKSIN…QSGKNHISTK (852 aa)) is DNA-binding and helicase activity, interacts with RecC. In terms of domain architecture, UvrD-like helicase ATP-binding spans 3–448 (TTIPKSINVT…YFLDTNWRSS (446 aa)). 24-31 (ASAGTGKT) lines the ATP pocket. The UvrD-like helicase C-terminal domain maps to 478–745 (SSRINKTTKF…KIVSIHKSKG (268 aa)). Residues 905–1180 (NYNFTSYSQL…EIIKKLEQIF (276 aa)) form a nuclease activity, interacts with RecD and RecA region. Mg(2+)-binding residues include His964, Asp1075, and Asp1088. The active-site For nuclease activity is the Asp1088.

The protein belongs to the helicase family. UvrD subfamily. As to quaternary structure, heterotrimer of RecB, RecC and RecD. All subunits contribute to DNA-binding. Interacts with RecA. Requires Mg(2+) as cofactor.

The enzyme catalyses Exonucleolytic cleavage (in the presence of ATP) in either 5'- to 3'- or 3'- to 5'-direction to yield 5'-phosphooligonucleotides.. The catalysed reaction is Couples ATP hydrolysis with the unwinding of duplex DNA by translocating in the 3'-5' direction.. It catalyses the reaction ATP + H2O = ADP + phosphate + H(+). Functionally, a helicase/nuclease that prepares dsDNA breaks (DSB) for recombinational DNA repair. Binds to DSBs and unwinds DNA via a highly rapid and processive ATP-dependent bidirectional helicase activity. Unwinds dsDNA until it encounters a Chi (crossover hotspot instigator) sequence from the 3' direction. Cuts ssDNA a few nucleotides 3' to the Chi site. The properties and activities of the enzyme are changed at Chi. The Chi-altered holoenzyme produces a long 3'-ssDNA overhang and facilitates RecA-binding to the ssDNA for homologous DNA recombination and repair. Holoenzyme degrades any linearized DNA that is unable to undergo homologous recombination. In the holoenzyme this subunit contributes ATPase, 3'-5' helicase, exonuclease activity and loads RecA onto ssDNA. The sequence is that of RecBCD enzyme subunit RecB from Buchnera aphidicola subsp. Baizongia pistaciae (strain Bp).